We begin with the raw amino-acid sequence, 238 residues long: Ankyrin repeat domain-containing protein 49 (238 aa).

At serine 48 the chain carries Phosphoserine. ANK repeat units follow at residues 77–105 (LLWAAEKNRLTTVQRLLSERATHVNTRDE), 106–135 (DKYTPLHRAAYNGHLDVVRELIAHGADVHA), 139–168 (DGWTPLHSACKWNNARVASFLLQHDADVNA), and 172–205 (GLLTPLHLAAGNRDSKDTLELLLMNRYIKPGLKN).

Its subcellular location is the nucleus. In terms of biological role, may have a role in spermatogenesis where it promotes autophagy in response to serum starvation, via the NF-kappaB pathway. In Bos taurus (Bovine), this protein is Ankyrin repeat domain-containing protein 49 (ANKRD49).